A 246-amino-acid polypeptide reads, in one-letter code: Glucosamine-6-phosphate deaminase (246 aa).

Catalysis depends on Asp67, which acts as the Proton acceptor; for enolization step. Asn136 serves as the catalytic For ring-opening step. The active-site Proton acceptor; for ring-opening step is the His138. Catalysis depends on Glu143, which acts as the For ring-opening step.

The protein belongs to the glucosamine/galactosamine-6-phosphate isomerase family. NagB subfamily.

It carries out the reaction alpha-D-glucosamine 6-phosphate + H2O = beta-D-fructose 6-phosphate + NH4(+). Its pathway is amino-sugar metabolism; N-acetylneuraminate degradation; D-fructose 6-phosphate from N-acetylneuraminate: step 5/5. In terms of biological role, catalyzes the reversible isomerization-deamination of glucosamine 6-phosphate (GlcN6P) to form fructose 6-phosphate (Fru6P) and ammonium ion. This chain is Glucosamine-6-phosphate deaminase, found in Halalkalibacterium halodurans (strain ATCC BAA-125 / DSM 18197 / FERM 7344 / JCM 9153 / C-125) (Bacillus halodurans).